Consider the following 123-residue polypeptide: Small ribosomal subunit protein uS13 (123 aa).

A disordered region spans residues 95-123 (GLPVRGQSSKTNARTRKGPRRSVMSRKKK). The segment covering 107–123 (ARTRKGPRRSVMSRKKK) has biased composition (basic residues).

This sequence belongs to the universal ribosomal protein uS13 family. In terms of assembly, part of the 30S ribosomal subunit. Forms a loose heterodimer with protein S19. Forms two bridges to the 50S subunit in the 70S ribosome.

Located at the top of the head of the 30S subunit, it contacts several helices of the 16S rRNA. In the 70S ribosome it contacts the 23S rRNA (bridge B1a) and protein L5 of the 50S subunit (bridge B1b), connecting the 2 subunits; these bridges are implicated in subunit movement. Contacts the tRNAs in the A and P-sites. The polypeptide is Small ribosomal subunit protein uS13 (Maridesulfovibrio salexigens (strain ATCC 14822 / DSM 2638 / NCIMB 8403 / VKM B-1763) (Desulfovibrio salexigens)).